The sequence spans 67 residues: Probable Sec-independent protein translocase protein TatE (67 aa).

Residues 1–21 (MEGISIAKLLIIGALIVLLFG) traverse the membrane as a helical segment. The disordered stretch occupies residues 44–67 (KDEDTSAARTTAEETPAERVSHKD).

It belongs to the TatA/E family. TatE subfamily.

It localises to the cell inner membrane. In terms of biological role, part of the twin-arginine translocation (Tat) system that transports large folded proteins containing a characteristic twin-arginine motif in their signal peptide across membranes. TatE shares overlapping functions with TatA. The protein is Probable Sec-independent protein translocase protein TatE of Pantoea ananatis (strain LMG 20103).